We begin with the raw amino-acid sequence, 1255 residues long: Structural polyprotein (1255 aa).

A necessary for nucleocapsid assembly and virus assembly region spans residues 1-33 (MFPFQPMYPMQPMPYRNPFAAPRRPWFPRTDPF). Residues 33–68 (FLAMQVQELTRSMANLTFKQRREAPPEGPPAKKPKR) form a host transcription inhibition region. A Supraphysiological nuclear export signal motif is present at residues 41-48 (LTRSMANL). The interval 44–119 (SMANLTFKQR…KKPGKRQRMV (76 aa)) is disordered. An N-linked (GlcNAc...) asparagine; by host glycan is attached at asparagine 47. The Nuclear localization signal motif lies at 64–68 (KKPKR). The segment covering 80 to 92 (GKKKKNQGKKKAK) has biased composition (basic residues). The tract at residues 91-127 (AKTGPPNPKAQNGNKKKTNKKPGKRQRMVMKLESDKT) is binding to the viral RNA. Phosphothreonine is present on residues threonine 93 and threonine 108. Residues 104–118 (NKKKTNKKPGKRQRM) are compositionally biased toward basic residues. Positions 112 to 126 (PGKRQRMVMKLESDK) are ribosome-binding. A Phosphoserine modification is found at serine 124. Residues 126 to 275 (KTFPIMLEGK…KYTPENCEQW (150 aa)) enclose the Peptidase S3 domain. Threonine 127 bears the Phosphothreonine mark. Catalysis depends on histidine 152, which acts as the Charge relay system. Residues 168–173 (KKASKY) are interaction with spike glycoprotein E2. Active-site charge relay system residues include aspartate 174 and serine 226. Residues 260 to 264 (EKGVT) are interaction with spike glycoprotein E2. Residues 276–287 (SLVTTMCLLANV) form a functions as an uncleaved signal peptide for the precursor of protein E3/E2 region. Residues 276 to 701 (SLVTTMCLLA…HYYHRYPMST (426 aa)) lie on the Extracellular side of the membrane. 7 disulfides stabilise this stretch: cysteine 282/cysteine 291, cysteine 353/cysteine 457, cysteine 356/cysteine 361, cysteine 424/cysteine 438, cysteine 485/cysteine 600, cysteine 534/cysteine 560, and cysteine 536/cysteine 554. Asparagine 286 is a glycosylation site (N-linked (GlcNAc...) asparagine; by host). N-linked (GlcNAc...) asparagine; by host glycosylation is present at asparagine 652. Residues 702-722 (ILGLSICAAIVTVSIAASTWL) traverse the membrane as a helical segment. At 723–757 (LCKSRVSCLTPYRLTPNARMPLCLAVLCCARTARA) the chain is on the cytoplasmic side. The tract at residues 725–729 (KSRVS) is interaction with the capsid protein. 3 S-palmitoyl cysteine; by host lipidation sites follow: cysteine 730, cysteine 750, and cysteine 751. Positions 730 to 750 (CLTPYRLTPNARMPLCLAVLC) are transient transmembrane before p62-6K protein processing. Cysteine 730 and cysteine 751 are joined by a disulfide. Topologically, residues 758 to 772 (ETTWESLDHLWNNNQ) are extracellular. The helical transmembrane segment at 773–793 (QMFWIQLLIPLAALIVVTRLL) threads the bilayer. Arginine 794 is a topological domain (cytoplasmic). A helical transmembrane segment spans residues 795-815 (CVCCVVPFLVVAGAAGAGAYE). The Extracellular segment spans residues 816-1225 (HATTMPSQAG…SKTAWTWLTS (410 aa)). Intrachain disulfides connect cysteine 862–cysteine 927, cysteine 875–cysteine 907, cysteine 876–cysteine 909, and cysteine 881–cysteine 891. An E1 fusion peptide loop region spans residues 897-914 (VYPFMWGGAYCFCDTENT). N-linked (GlcNAc...) asparagine; by host glycans are attached at residues asparagine 947 and asparagine 1083. 4 disulfide bridges follow: cysteine 1072-cysteine 1084, cysteine 1114-cysteine 1189, cysteine 1119-cysteine 1193, and cysteine 1141-cysteine 1183. The chain crosses the membrane as a helical span at residues 1226–1246 (LLGGSAVIIIIGLVLATIVAM). Residues 1247 to 1255 (YVLTNQKHN) are Cytoplasmic-facing.

In terms of assembly, homodimer. Homomultimer. Interacts with host karyopherin KPNA4; this interaction allows the nuclear import of the viral capsid protein. Interacts with spike glycoprotein E2. Interacts with host IRAK1; the interaction leads to inhibition of IRAK1-dependent signaling. Part of a tetrameric complex composed of host CRM1, host importin alpha/beta dimer and the viral capsid; this complex blocks the receptor-mediated transport through the nuclear pore. Interacts with host phosphatase PPP1CA; this interaction dephosphorylates the capsid protein, which increases its ability to bind to the viral genome. The precursor of protein E3/E2 and E1 form a heterodimer shortly after synthesis. As to quaternary structure, interacts with spike glycoprotein E2. The precursor of protein E3/E2 and E1 form a heterodimer shortly after synthesis. Processing of the precursor of protein E3/E2 into E2 and E3 results in a heterodimer of the spike glycoproteins E2 and E1. Spike at virion surface are constituted of three E2-E1 heterodimers. After target cell attachment and endocytosis, E1 change conformation to form homotrimers. Interacts with 6K protein. Interacts with host LDLRAD3; this interaction mediates viral entry to the host cell. In terms of assembly, interacts with spike glycoprotein E1. Processing of the precursor of protein E3/E2 into E2 and E3 results in a heterodimer of the spike glycoproteins E2 and E1. Spike at virion surface are constituted of a trimer of E2-E1 heterodimers. Interacts with 6K protein. Interacts with host LDLRAD3; this interaction mediates viral entry to the host cell. Oligomer. Interacts with spike glycoprotein E1. Interacts with spike glycoprotein E2. Post-translationally, structural polyprotein: Specific enzymatic cleavages in vivo yield mature proteins. Capsid protein is auto-cleaved during polyprotein translation, unmasking a signal peptide at the N-terminus of the precursor of E3/E2. The remaining polyprotein is then targeted to the host endoplasmic reticulum, where host signal peptidase cleaves it into pE2, 6K and E1 proteins. pE2 is further processed to mature E3 and E2 by host furin in trans-Golgi vesicle. Phosphorylated on serine and threonine residues. In terms of processing, palmitoylated via thioester bonds. These palmitoylations may induce disruption of the C-terminus transmembrane. This would result in the reorientation of E2 C-terminus from lumenal to cytoplasmic side. Post-translationally, N-glycosylated. Palmitoylated via thioester bonds.

It localises to the virion. Its subcellular location is the host cytoplasm. It is found in the host cell membrane. The protein resides in the host nucleus. The protein localises to the virion membrane. It localises to the host Golgi apparatus. Its subcellular location is the host trans-Golgi network. It is found in the host endoplasmic reticulum. The catalysed reaction is Autocatalytic release of the core protein from the N-terminus of the togavirus structural polyprotein by hydrolysis of a -Trp-|-Ser- bond.. In terms of biological role, forms an icosahedral capsid with a T=4 symmetry composed of 240 copies of the capsid protein surrounded by a lipid membrane through which penetrate 80 spikes composed of trimers of E1-E2 heterodimers. The capsid protein binds to the viral RNA genome at a site adjacent to a ribosome binding site for viral genome translation following genome release. Possesses a protease activity that results in its autocatalytic cleavage from the nascent structural protein. Following its self-cleavage, the capsid protein transiently associates with ribosomes, and within several minutes the protein binds to viral RNA and rapidly assembles into icosahedric core particles. The resulting nucleocapsid eventually associates with the cytoplasmic domain of the spike glycoprotein E2 at the cell membrane, leading to budding and formation of mature virions. In case of infection, new virions attach to target cells and after clathrin-mediated endocytosis their membrane fuses with the host endosomal membrane. This leads to the release of the nucleocapsid into the cytoplasm, followed by an uncoating event necessary for the genomic RNA to become accessible. The uncoating might be triggered by the interaction of capsid proteins with ribosomes. Binding of ribosomes would release the genomic RNA since the same region is genomic RNA-binding and ribosome-binding. Specifically inhibits interleukin-1 receptor-associated kinase 1/IRAK1-dependent signaling during viral entry, representing a means by which the alphaviruses may evade innate immune detection and activation prior to viral gene expression. Inhibits host transcription. Forms a tetrameric complex with XPO1/CRM1 and the nuclear import receptor importin. This complex blocks the central channel of host nuclear pores thereby inhibiting the receptor-mediated nuclear transport and thus the host mRNA and rRNA transcription. The inhibition of transcription is linked to a cytopathic effect on the host cell. Functionally, provides the signal sequence for the translocation of the precursor of protein E3/E2 to the host endoplasmic reticulum. Furin-cleaved E3 remains associated with spike glycoprotein E1 and mediates pH protection of the latter during the transport via the secretory pathway. After virion release from the host cell, the assembly protein E3 is gradually released in the extracellular space. Plays a role in viral attachment to target host cell, by binding to the cell receptor LDLRAD3. Synthesized as a p62 precursor which is processed by furin at the cell membrane just before virion budding, giving rise to E2-E1 heterodimer. The p62-E1 heterodimer is stable, whereas E2-E1 is unstable and dissociate at low pH. p62 is processed at the last step, presumably to avoid E1 fusion activation before its final export to cell surface. E2 C-terminus contains a transitory transmembrane that would be disrupted by palmitoylation, resulting in reorientation of the C-terminal tail from lumenal to cytoplasmic side. This step is critical since E2 C-terminus is involved in budding by interacting with capsid proteins. This release of E2 C-terminus in cytoplasm occurs lately in protein export, and precludes premature assembly of particles at the endoplasmic reticulum membrane. Its function is as follows. Acts as a viroporin that participates in virus glycoprotein processing and transport to the plasma membrane, cell permeabilization and budding of viral particles. Disrupts the calcium homeostasis of the cell, probably at the endoplasmic reticulum level. This leads to cytoplasmic calcium elevation. Because of its lipophilic properties, the 6K protein is postulated to influence the selection of lipids that interact with the transmembrane domains of the glycoproteins, which, in turn, affects the deformability of the bilayer required for the extreme curvature that occurs as budding proceeds. Present in low amount in virions, about 3% compared to viral glycoproteins. In terms of biological role, class II viral fusion protein. Fusion activity is inactive as long as E1 is bound to E2 in mature virion. After virus attachment to cell receptor LDLRAD3 and endocytosis, acidification of the endosome induce dissociation of E1/E2 heterodimer and concomitant trimerization of the E1 subunits. This E1 trimer is fusion active, and promotes release of viral nucleocapsid in cytoplasm after endosome and viral membrane fusion. Efficient fusion requires the presence of cholesterol and sphingolipid in the target membrane. This chain is Structural polyprotein, found in Venezuelan equine encephalitis virus (strain 3880) (VEEV).